Here is a 190-residue protein sequence, read N- to C-terminus: Large ribosomal subunit protein bL9 (190 aa).

This sequence belongs to the bacterial ribosomal protein bL9 family.

Functionally, binds to the 23S rRNA. In Methylorubrum extorquens (strain CM4 / NCIMB 13688) (Methylobacterium extorquens), this protein is Large ribosomal subunit protein bL9.